Here is a 476-residue protein sequence, read N- to C-terminus: Adenosylhomocysteinase (476 aa).

The substrate site is built by T67, D142, and E202. NAD(+) is bound at residue T203–T205. Substrate-binding residues include K232 and D236. Residues N237, G266 to G271, E289, N324, I345 to H347, and N390 each bind NAD(+).

The protein belongs to the adenosylhomocysteinase family. NAD(+) serves as cofactor.

The protein localises to the cytoplasm. It catalyses the reaction S-adenosyl-L-homocysteine + H2O = L-homocysteine + adenosine. The protein operates within amino-acid biosynthesis; L-homocysteine biosynthesis; L-homocysteine from S-adenosyl-L-homocysteine: step 1/1. May play a key role in the regulation of the intracellular concentration of adenosylhomocysteine. This Synechococcus sp. (strain CC9902) protein is Adenosylhomocysteinase.